The primary structure comprises 720 residues: Hexanoyl-CoA synthase (720 aa).

The chain crosses the membrane as a helical span at residues 242–262 (VDAVVIYLAIVLAGYVVVSIA). 290 to 293 (RGKK) provides a ligand contact to CoA. ATP contacts are provided by residues 477 to 479 (GEA), 499 to 504 (EMCGGT), Glu585, and Arg607. Residue Gly615 participates in CoA binding. Lys618 contacts ATP. Gln681 is a binding site for CoA.

The protein belongs to the ATP-dependent AMP-binding enzyme family. It depends on Mg(2+) as a cofactor. As to expression, accumulates in glandular trichomes, especially in female flowers. Present at low levels in roots, stems and leaves.

It is found in the cytoplasm. The protein resides in the cytosol. The protein localises to the membrane. The enzyme catalyses hexanoate + ATP + CoA = hexanoyl-CoA + AMP + diphosphate. The protein operates within secondary metabolite biosynthesis; terpenoid biosynthesis. Inhibitied by high CoA concentrations. In terms of biological role, involved in the biosynthesis of cannabinoids-related terpenophenolic natural products, which have pharmacological activity. Acyl-activating enzyme that catalyzes the conversion of hexanoic acid to hexanoyl-CoA, precursor of the cannabinoid pathway. Can also activate other fatty acids including heptanoate, octanoate and nonanoate. This is Hexanoyl-CoA synthase from Cannabis sativa (Hemp).